Reading from the N-terminus, the 268-residue chain is Tropinone reductase homolog At2g29370 (268 aa).

Residue 22 to 46 (LVTGGSKGLGKAVVEELAMLGARVH) participates in NADP(+) binding. Serine 155 is a substrate binding site. Tyrosine 168 functions as the Proton acceptor in the catalytic mechanism.

Belongs to the short-chain dehydrogenases/reductases (SDR) family. SDR65C subfamily.

The protein is Tropinone reductase homolog At2g29370 of Arabidopsis thaliana (Mouse-ear cress).